A 369-amino-acid polypeptide reads, in one-letter code: MRDNTQHYRELFLDDIPLMDVRAPVEYHKGAFPNTVNRPLMNDIERQKVGTSYKQHGQQAAIALGHELVCGALKAERLAAWKAFAEANPNGYLYCFRGGLRSQIVQQWLKQDAGIDYPRVIGGYKALRNFLFETTRAAVDECDFVLVGGLTGCGKTEVIAALDNSLDLEGHANHRGSSFGRRATPQPAQIDFENRLAIDILKKRHRGVGQFVLEDEGRIVGSCSLPLELYQGMQGYPLVWLEDAFEQRVERILRDYVIDLRSEFERVVGVEEGFAAFSAYLQKSLAGIVKRLGGERYQRLAAILVQALEEQGRDGSVDTHRGWIEGLLKEYYDPMYAFQRQSKEDRVEFRGNQAEVIGYLRQRQALRPS.

Positions 12-136 (FLDDIPLMDV…LRNFLFETTR (125 aa)) constitute a Rhodanese domain. Residue C95 is the S-selanylcysteine intermediate of the active site.

It belongs to the SelU family. Monomer.

It carries out the reaction 5-methylaminomethyl-2-thiouridine(34) in tRNA + selenophosphate + (2E)-geranyl diphosphate + H2O + H(+) = 5-methylaminomethyl-2-selenouridine(34) in tRNA + (2E)-thiogeraniol + phosphate + diphosphate. The enzyme catalyses 5-methylaminomethyl-2-thiouridine(34) in tRNA + (2E)-geranyl diphosphate = 5-methylaminomethyl-S-(2E)-geranyl-thiouridine(34) in tRNA + diphosphate. It catalyses the reaction 5-methylaminomethyl-S-(2E)-geranyl-thiouridine(34) in tRNA + selenophosphate + H(+) = 5-methylaminomethyl-2-(Se-phospho)selenouridine(34) in tRNA + (2E)-thiogeraniol. The catalysed reaction is 5-methylaminomethyl-2-(Se-phospho)selenouridine(34) in tRNA + H2O = 5-methylaminomethyl-2-selenouridine(34) in tRNA + phosphate. In terms of biological role, involved in the post-transcriptional modification of the uridine at the wobble position (U34) of tRNA(Lys), tRNA(Glu) and tRNA(Gln). Catalyzes the conversion of 2-thiouridine (S2U-RNA) to 2-selenouridine (Se2U-RNA). Acts in a two-step process involving geranylation of 2-thiouridine (S2U) to S-geranyl-2-thiouridine (geS2U) and subsequent selenation of the latter derivative to 2-selenouridine (Se2U) in the tRNA chain. The protein is tRNA 2-selenouridine synthase of Pseudomonas aeruginosa (strain ATCC 15692 / DSM 22644 / CIP 104116 / JCM 14847 / LMG 12228 / 1C / PRS 101 / PAO1).